The primary structure comprises 580 residues: Extracellular protease (580 aa).

The first 32 residues, 1–32, serve as a signal peptide directing secretion; the sequence is MSTASLRKRTGSLTILGASALTSLLLAMPAFA. Positions 33-136 are excised as a propeptide; that stretch reads GEVYLDGLAT…VEVDQILHAT (104 aa). The 319-residue stretch at 147–465 folds into the Peptidase S8 domain; that stretch reads QWAFGTTNAG…AGIVNADAAV (319 aa). Active-site charge relay system residues include Asp-177 and His-237. Cystine bridges form between Cys-225–Cys-273 and Cys-315–Cys-352. The active-site Charge relay system is Ser-409. A disulfide bond links Cys-450 and Cys-454.

The protein belongs to the peptidase S8 family.

The protein localises to the secreted. The chain is Extracellular protease from Xanthomonas campestris pv. campestris (strain ATCC 33913 / DSM 3586 / NCPPB 528 / LMG 568 / P 25).